An 89-amino-acid chain; its full sequence is Large ribosomal subunit protein eL43 (89 aa).

Residues C38, C41, C56, and C59 each contribute to the Zn(2+) site. Residues 38-59 (CPVCHKRAVKRVGTGIWRCTKC) form a C4-type zinc finger.

Belongs to the eukaryotic ribosomal protein eL43 family. Putative zinc-binding subfamily. Part of the 50S ribosomal subunit. Requires Zn(2+) as cofactor.

Its function is as follows. Binds to the 23S rRNA. This chain is Large ribosomal subunit protein eL43, found in Methanopyrus kandleri (strain AV19 / DSM 6324 / JCM 9639 / NBRC 100938).